A 125-amino-acid chain; its full sequence is Small ribosomal subunit protein bS6 (125 aa).

It belongs to the bacterial ribosomal protein bS6 family.

Its function is as follows. Binds together with bS18 to 16S ribosomal RNA. The protein is Small ribosomal subunit protein bS6 of Campylobacter jejuni subsp. jejuni serotype O:23/36 (strain 81-176).